Reading from the N-terminus, the 252-residue chain is tRNA (guanine-N(1)-)-methyltransferase (252 aa).

S-adenosyl-L-methionine contacts are provided by residues G110 and 130-135 (VGDFVL).

The protein belongs to the RNA methyltransferase TrmD family. In terms of assembly, homodimer.

It localises to the cytoplasm. It catalyses the reaction guanosine(37) in tRNA + S-adenosyl-L-methionine = N(1)-methylguanosine(37) in tRNA + S-adenosyl-L-homocysteine + H(+). Functionally, specifically methylates guanosine-37 in various tRNAs. The sequence is that of tRNA (guanine-N(1)-)-methyltransferase from Magnetococcus marinus (strain ATCC BAA-1437 / JCM 17883 / MC-1).